A 150-amino-acid polypeptide reads, in one-letter code: Macrodomain Ter protein (150 aa).

This sequence belongs to the MatP family. As to quaternary structure, homodimer.

It localises to the cytoplasm. Its function is as follows. Required for spatial organization of the terminus region of the chromosome (Ter macrodomain) during the cell cycle. Prevents early segregation of duplicated Ter macrodomains during cell division. Binds specifically to matS, which is a 13 bp signature motif repeated within the Ter macrodomain. The chain is Macrodomain Ter protein from Salmonella arizonae (strain ATCC BAA-731 / CDC346-86 / RSK2980).